Reading from the N-terminus, the 244-residue chain is Salivary gland SP38-40.A protein (244 aa).

A signal peptide spans 1–21 (MRIKFLVVLAVICLFAHYASA). Disordered regions lie at residues 23–91 (GMGG…EKKQ), 137–169 (PPPGAKKDDKKEKKTVKVVKPPKEKPPKKLRKE), and 206–244 (VQGKQKKGAKKAKGGKKAAPKPGPKPGPKQADKPKDAKK). 2 stretches are compositionally biased toward basic and acidic residues: residues 26 to 86 (GDKK…EVKK) and 157 to 169 (PPKEKPPKKLRKE). 2 repeat units span residues 29–34 (KPKDAP) and 35–40 (KPKDAP). The 3 X 6 AA approximate tandem repeats of K-P-K-D-A-P stretch occupies residues 29–47 (KPKDAPKPKDAPKPKEVKP). The stretch at 41–47 (KPKEVKP) is one 1-3; approximate repeat. Repeat copies occupy residues 156–159 (KPPK) and 161–164 (KPPK). A 3 X 4 AA approximate tandem repeats of K-P-P-K region spans residues 156-168 (KPPKEKPPKKLRK). One copy of the 2-3; approximate repeat lies at 165–168 (KLRK). Over residues 209 to 224 (KQKKGAKKAKGGKKAA) the composition is skewed to basic residues. 3 tandem repeats follow at residues 225-228 (PKPG), 229-232 (PKPG), and 233-236 (PKQA). The 4 X 4 AA approximate tandem repeats of P-K-[PQ]-[GA] stretch occupies residues 225–240 (PKPGPKPGPKQADKPK). Over residues 235–244 (QADKPKDAKK) the composition is skewed to basic and acidic residues. A 3-4; approximate repeat occupies 237–240 (DKPK).

Salivary gland.

It is found in the secreted. Its function is as follows. Used by the larvae to construct a supramolecular structure, the larval tube. In Chironomus tentans (Midge), this protein is Salivary gland SP38-40.A protein (SP38-40.A).